Here is a 150-residue protein sequence, read N- to C-terminus: Endoribonuclease YbeY (150 aa).

Zn(2+) contacts are provided by H102, H106, and H112.

The protein belongs to the endoribonuclease YbeY family. Zn(2+) serves as cofactor.

It localises to the cytoplasm. Its function is as follows. Single strand-specific metallo-endoribonuclease involved in late-stage 70S ribosome quality control and in maturation of the 3' terminus of the 16S rRNA. In Thermotoga petrophila (strain ATCC BAA-488 / DSM 13995 / JCM 10881 / RKU-1), this protein is Endoribonuclease YbeY.